The chain runs to 347 residues: Phenylalanine--tRNA ligase alpha subunit (347 aa).

Residue Glu-265 coordinates Mg(2+).

The protein belongs to the class-II aminoacyl-tRNA synthetase family. Phe-tRNA synthetase alpha subunit type 1 subfamily. In terms of assembly, tetramer of two alpha and two beta subunits. Requires Mg(2+) as cofactor.

It localises to the cytoplasm. It carries out the reaction tRNA(Phe) + L-phenylalanine + ATP = L-phenylalanyl-tRNA(Phe) + AMP + diphosphate + H(+). The polypeptide is Phenylalanine--tRNA ligase alpha subunit (Mycolicibacterium paratuberculosis (strain ATCC BAA-968 / K-10) (Mycobacterium paratuberculosis)).